Here is a 459-residue protein sequence, read N- to C-terminus: tRNA modification GTPase MnmE (459 aa).

The (6S)-5-formyl-5,6,7,8-tetrahydrofolate site is built by R23, E88, and R127. A TrmE-type G domain is found at 223–381 (GLNTVIIGKP…LKDTIENMFA (159 aa)). Residue N233 participates in K(+) binding. GTP-binding positions include 233-238 (NVGKSS), 252-258 (TDIPGTT), and 277-280 (DTAG). S237 is a Mg(2+) binding site. K(+)-binding residues include T252, I254, and T257. Position 258 (T258) interacts with Mg(2+). K459 is a binding site for (6S)-5-formyl-5,6,7,8-tetrahydrofolate.

This sequence belongs to the TRAFAC class TrmE-Era-EngA-EngB-Septin-like GTPase superfamily. TrmE GTPase family. Homodimer. Heterotetramer of two MnmE and two MnmG subunits. K(+) is required as a cofactor.

The protein localises to the cytoplasm. Exhibits a very high intrinsic GTPase hydrolysis rate. Involved in the addition of a carboxymethylaminomethyl (cmnm) group at the wobble position (U34) of certain tRNAs, forming tRNA-cmnm(5)s(2)U34. The polypeptide is tRNA modification GTPase MnmE (Clostridium acetobutylicum (strain ATCC 824 / DSM 792 / JCM 1419 / IAM 19013 / LMG 5710 / NBRC 13948 / NRRL B-527 / VKM B-1787 / 2291 / W)).